Here is a 165-residue protein sequence, read N- to C-terminus: Shikimate kinase (165 aa).

11 to 16 is an ATP binding site; that stretch reads GAGKTT. Threonine 15 serves as a coordination point for Mg(2+). Aspartate 33, arginine 57, and glycine 78 together coordinate substrate. An ATP-binding site is contributed by arginine 116. A substrate-binding site is contributed by arginine 134.

The protein belongs to the shikimate kinase family. As to quaternary structure, monomer. It depends on Mg(2+) as a cofactor.

It is found in the cytoplasm. The catalysed reaction is shikimate + ATP = 3-phosphoshikimate + ADP + H(+). The protein operates within metabolic intermediate biosynthesis; chorismate biosynthesis; chorismate from D-erythrose 4-phosphate and phosphoenolpyruvate: step 5/7. In terms of biological role, catalyzes the specific phosphorylation of the 3-hydroxyl group of shikimic acid using ATP as a cosubstrate. This Bacillus cereus (strain G9842) protein is Shikimate kinase.